A 570-amino-acid chain; its full sequence is Periplasmic trehalase (570 aa).

The signal sequence occupies residues 1 to 34 (MIPPEIRRSVLLQKAIKLALAGTLLTFASFSATA). Substrate-binding positions include Arg159, 166–167 (WD), Asn203, 212–214 (RSQ), 284–286 (RPE), and Gly317. Residues Asp319 and Glu503 each act as proton donor/acceptor in the active site. Glu518 contacts substrate. The tract at residues 544 to 570 (KPCDSVPSTRPASLSATPTKTPSAATQ) is disordered. Residues 554–570 (PASLSATPTKTPSAATQ) show a composition bias toward low complexity.

This sequence belongs to the glycosyl hydrolase 37 family. Monomer.

It is found in the periplasm. The enzyme catalyses alpha,alpha-trehalose + H2O = alpha-D-glucose + beta-D-glucose. In terms of biological role, provides the cells with the ability to utilize trehalose at high osmolarity by splitting it into glucose molecules that can subsequently be taken up by the phosphotransferase-mediated uptake system. The sequence is that of Periplasmic trehalase from Salmonella choleraesuis (strain SC-B67).